The chain runs to 89 residues: Small ribosomal subunit protein uS15 (89 aa).

The protein belongs to the universal ribosomal protein uS15 family. Part of the 30S ribosomal subunit. Forms a bridge to the 50S subunit in the 70S ribosome, contacting the 23S rRNA.

In terms of biological role, one of the primary rRNA binding proteins, it binds directly to 16S rRNA where it helps nucleate assembly of the platform of the 30S subunit by binding and bridging several RNA helices of the 16S rRNA. Functionally, forms an intersubunit bridge (bridge B4) with the 23S rRNA of the 50S subunit in the ribosome. This Shewanella sediminis (strain HAW-EB3) protein is Small ribosomal subunit protein uS15.